The chain runs to 450 residues: MSTALVILAAGKGTRMKSDLPKVLHPIAHAPMLVHAMRAGAVLEPARTVIVAGHGAEAVRAAALDEDEGATVVLQEEQLGTAHAVDQARAALEGFEGDVVVLYGDTPFLQPDTLERMLAARKTHDLVILGFEAADPARYGRLVMQGDSLERIVEFKEATEQERAIRFCNSGLLACNAETLFALIAAVGNNNASGEYYLTDVVEIARKQGLAVTAVACDEAQTLGVNSRADLAAADAIFQTRARAELLDLGVTLMAPETVYLAADTVIGRDTVIEPNVVFGPGVTVESGATIRAFSHLEGCHVSRGAVVGPYARLRPGAELAENARIGNFVEIKNAEIGEGAKVNHLTYIGDASIGAGSNIGAGTITCNYDGVMKHRTTIGANVFIGSNTMLVAPVTLGDGAMTATGTVVTRDVEPDALAKARVKQENKPDRARKLFEMLRAKKASKQKET.

Residues 1-228 (MSTALVILAA…EAQTLGVNSR (228 aa)) are pyrophosphorylase. Residues 8–11 (LAAG), Lys22, Gln75, 80–81 (GT), 103–105 (YGD), Gly140, Glu154, Asn169, and Asn226 contribute to the UDP-N-acetyl-alpha-D-glucosamine site. Asp105 provides a ligand contact to Mg(2+). A Mg(2+)-binding site is contributed by Asn226. Residues 229-249 (ADLAAADAIFQTRARAELLDL) form a linker region. The interval 250 to 450 (GVTLMAPETV…AKKASKQKET (201 aa)) is N-acetyltransferase. Residues Arg315 and Lys333 each coordinate UDP-N-acetyl-alpha-D-glucosamine. His345 serves as the catalytic Proton acceptor. Positions 348 and 359 each coordinate UDP-N-acetyl-alpha-D-glucosamine. Acetyl-CoA contacts are provided by residues Ala362, 368–369 (NY), Ser387, Thr405, and Arg422.

This sequence in the N-terminal section; belongs to the N-acetylglucosamine-1-phosphate uridyltransferase family. The protein in the C-terminal section; belongs to the transferase hexapeptide repeat family. Homotrimer. It depends on Mg(2+) as a cofactor.

The protein resides in the cytoplasm. It carries out the reaction alpha-D-glucosamine 1-phosphate + acetyl-CoA = N-acetyl-alpha-D-glucosamine 1-phosphate + CoA + H(+). The enzyme catalyses N-acetyl-alpha-D-glucosamine 1-phosphate + UTP + H(+) = UDP-N-acetyl-alpha-D-glucosamine + diphosphate. Its pathway is nucleotide-sugar biosynthesis; UDP-N-acetyl-alpha-D-glucosamine biosynthesis; N-acetyl-alpha-D-glucosamine 1-phosphate from alpha-D-glucosamine 6-phosphate (route II): step 2/2. It participates in nucleotide-sugar biosynthesis; UDP-N-acetyl-alpha-D-glucosamine biosynthesis; UDP-N-acetyl-alpha-D-glucosamine from N-acetyl-alpha-D-glucosamine 1-phosphate: step 1/1. It functions in the pathway bacterial outer membrane biogenesis; LPS lipid A biosynthesis. In terms of biological role, catalyzes the last two sequential reactions in the de novo biosynthetic pathway for UDP-N-acetylglucosamine (UDP-GlcNAc). The C-terminal domain catalyzes the transfer of acetyl group from acetyl coenzyme A to glucosamine-1-phosphate (GlcN-1-P) to produce N-acetylglucosamine-1-phosphate (GlcNAc-1-P), which is converted into UDP-GlcNAc by the transfer of uridine 5-monophosphate (from uridine 5-triphosphate), a reaction catalyzed by the N-terminal domain. The protein is Bifunctional protein GlmU of Ruegeria pomeroyi (strain ATCC 700808 / DSM 15171 / DSS-3) (Silicibacter pomeroyi).